The chain runs to 334 residues: UDP-N-acetylenolpyruvoylglucosamine reductase (334 aa).

Positions I16 to T186 constitute an FAD-binding PCMH-type domain. R162 is a catalytic residue. The active-site Proton donor is S232. Residue E329 is part of the active site.

Belongs to the MurB family. Requires FAD as cofactor.

The protein localises to the cytoplasm. It catalyses the reaction UDP-N-acetyl-alpha-D-muramate + NADP(+) = UDP-N-acetyl-3-O-(1-carboxyvinyl)-alpha-D-glucosamine + NADPH + H(+). It functions in the pathway cell wall biogenesis; peptidoglycan biosynthesis. Functionally, cell wall formation. In Buchnera aphidicola subsp. Baizongia pistaciae (strain Bp), this protein is UDP-N-acetylenolpyruvoylglucosamine reductase.